Reading from the N-terminus, the 246-residue chain is Exosome complex component Rrp41 (246 aa).

Belongs to the RNase PH family. Rrp41 subfamily. In terms of assembly, component of the archaeal exosome complex. Forms a hexameric ring-like arrangement composed of 3 Rrp41-Rrp42 heterodimers. The hexameric ring associates with a trimer of Rrp4 and/or Csl4 subunits.

Its subcellular location is the cytoplasm. Its function is as follows. Catalytic component of the exosome, which is a complex involved in RNA degradation. Has 3'-&gt;5' exoribonuclease activity. Can also synthesize heteromeric RNA-tails. This Pyrobaculum islandicum (strain DSM 4184 / JCM 9189 / GEO3) protein is Exosome complex component Rrp41.